The sequence spans 274 residues: 2,3,4,5-tetrahydropyridine-2,6-dicarboxylate N-succinyltransferase (274 aa).

2 residues coordinate substrate: Arg103 and Asp140.

The protein belongs to the transferase hexapeptide repeat family. Homotrimer.

It is found in the cytoplasm. The catalysed reaction is (S)-2,3,4,5-tetrahydrodipicolinate + succinyl-CoA + H2O = (S)-2-succinylamino-6-oxoheptanedioate + CoA. The protein operates within amino-acid biosynthesis; L-lysine biosynthesis via DAP pathway; LL-2,6-diaminopimelate from (S)-tetrahydrodipicolinate (succinylase route): step 1/3. This Haemophilus ducreyi (strain 35000HP / ATCC 700724) protein is 2,3,4,5-tetrahydropyridine-2,6-dicarboxylate N-succinyltransferase.